Consider the following 427-residue polypeptide: A-adding tRNA nucleotidyltransferase (427 aa).

49–52 (GTVR) contributes to the ATP binding site. Mg(2+)-binding residues include D62 and D64. Residues 136–137 (RD), N141, 181–190 (DPTRLLRGVR), R194, and R225 contribute to the ATP site.

This sequence belongs to the tRNA nucleotidyltransferase/poly(A) polymerase family. It depends on Mg(2+) as a cofactor.

It carries out the reaction a tRNA with a 3' CC end + ATP = a tRNA with a 3' CCA end + diphosphate. Its function is as follows. tRNA nucleotidyltransferase involved in the synthesis of the tRNA CCA terminus. Adds the terminal adenosine residue to tRNA. The polypeptide is A-adding tRNA nucleotidyltransferase (Halalkalibacterium halodurans (strain ATCC BAA-125 / DSM 18197 / FERM 7344 / JCM 9153 / C-125) (Bacillus halodurans)).